The sequence spans 125 residues: Fluoride-specific ion channel FluC (125 aa).

The next 4 membrane-spanning stretches (helical) occupy residues V6–I26, F35–A55, L66–I86, and A100–L120. The Na(+) site is built by G76 and T79.

Belongs to the fluoride channel Fluc/FEX (TC 1.A.43) family.

The protein resides in the cell inner membrane. It catalyses the reaction fluoride(in) = fluoride(out). With respect to regulation, na(+) is not transported, but it plays an essential structural role and its presence is essential for fluoride channel function. Fluoride-specific ion channel. Important for reducing fluoride concentration in the cell, thus reducing its toxicity. This is Fluoride-specific ion channel FluC from Gloeobacter violaceus (strain ATCC 29082 / PCC 7421).